We begin with the raw amino-acid sequence, 355 residues long: NADH-quinone oxidoreductase subunit H (355 aa).

The next 8 helical transmembrane spans lie at 25–45, 91–111, 126–146, 170–190, 205–225, 253–273, 290–310, and 330–350; these read IVRI…LILW, WLYL…WAVI, LLYA…AGWA, MGFA…SEIV, FLSW…VSGI, MAFA…SALA, FIPG…VFIW, and VFLP…MSPL.

The protein belongs to the complex I subunit 1 family. In terms of assembly, NDH-1 is composed of 14 different subunits. Subunits NuoA, H, J, K, L, M, N constitute the membrane sector of the complex.

It is found in the cell inner membrane. The catalysed reaction is a quinone + NADH + 5 H(+)(in) = a quinol + NAD(+) + 4 H(+)(out). NDH-1 shuttles electrons from NADH, via FMN and iron-sulfur (Fe-S) centers, to quinones in the respiratory chain. The immediate electron acceptor for the enzyme in this species is believed to be ubiquinone. Couples the redox reaction to proton translocation (for every two electrons transferred, four hydrogen ions are translocated across the cytoplasmic membrane), and thus conserves the redox energy in a proton gradient. This subunit may bind ubiquinone. This is NADH-quinone oxidoreductase subunit H from Burkholderia ambifaria (strain MC40-6).